A 49-amino-acid polypeptide reads, in one-letter code: Sperm protamine P1 (49 aa).

Residues 1–49 (MARYRCCRSHSRSRCRRRRRRSRRRRRRSCGRRRRAGYRRYTVRYRRRR) form a disordered region.

It belongs to the protamine P1 family. In terms of tissue distribution, testis.

The protein resides in the nucleus. The protein localises to the chromosome. Its function is as follows. Protamines substitute for histones in the chromatin of sperm during the haploid phase of spermatogenesis. They compact sperm DNA into a highly condensed, stable and inactive complex. In Macronycteris commersonii (Commerson's roundleaf bat), this protein is Sperm protamine P1 (PRM1).